The sequence spans 122 residues: Basic phospholipase A2 homolog myotoxin II (122 aa).

Cystine bridges form between C26-C116, C28-C44, C43-C95, C49-C122, C50-C88, C57-C81, and C75-C86. Residues 105–118 are important for membrane-damaging activities in eukaryotes and bacteria; heparin-binding; that stretch reads KKYRYNYLKPFCKK.

The protein belongs to the phospholipase A2 family. Group II subfamily. K49 sub-subfamily. As to quaternary structure, homodimer; non-covalently linked (probable alternative/compact dimer conformation). In terms of tissue distribution, expressed by the venom gland.

The protein localises to the secreted. Myotoxic activity is inhibited by suramin and rosmarinic acid. Cytotoxic and myotoxic activities are inhibited by pre-incubation with varespladib. Suramin inhibits this myotoxin by (i) direct blockage of the MDoS and MDiS, preventing the toxin/membrane interaction and disruption and (ii) formation of an oligomeric complex, resulting in a tetrameric configuration for which both MDoS and MDiS becomes physically inaccessible, thus avoiding any possibility of toxin-membrane interaction or disruption. Heparin completely inhibits the cytotoxic and bactericidal activities, but only partially the myotoxic, edema-inducing and lethal effects. Its function is as follows. Snake venom phospholipase A2 (PLA2) homolog that lacks enzymatic activity. Shows high myotoxin activities. Also shows neurotoxicity, since it induces muscle paralysis when tested on mouse phrenic-diaphragm preparations. Displays edema-inducing activities. Also displays antimicrobial activity against E.coli and C.albicans, as well as antitumoral activity against some human and mice cell lines. In addition, it is effective as parasiticidal agent against Leishmania sp. and S.mansoni. It also disrupts negatively charged liposomes in a dose- and temperature-dependent manner and shows toxicity by intraperitoneal route. In contrast to other phospholipase A2-like toxins, this myotoxin does not require fatty acid binding to be active. The sequence is that of Basic phospholipase A2 homolog myotoxin II from Bothrops moojeni (Lance-headed viper).